The sequence spans 356 residues: DNA polymerase IV (356 aa).

Residues 7–188 (IIHIDMDCFY…LPLKKIPRVG (182 aa)) enclose the UmuC domain. Residues Asp-11 and Asp-106 each contribute to the Mg(2+) site. Glu-107 is a catalytic residue.

This sequence belongs to the DNA polymerase type-Y family. In terms of assembly, monomer. The cofactor is Mg(2+).

The protein localises to the cytoplasm. It carries out the reaction DNA(n) + a 2'-deoxyribonucleoside 5'-triphosphate = DNA(n+1) + diphosphate. In terms of biological role, poorly processive, error-prone DNA polymerase involved in untargeted mutagenesis. Copies undamaged DNA at stalled replication forks, which arise in vivo from mismatched or misaligned primer ends. These misaligned primers can be extended by PolIV. Exhibits no 3'-5' exonuclease (proofreading) activity. May be involved in translesional synthesis, in conjunction with the beta clamp from PolIII. This chain is DNA polymerase IV, found in Actinobacillus pleuropneumoniae serotype 5b (strain L20).